The primary structure comprises 477 residues: Sensor protein kinase PmrB (477 aa).

The next 2 helical transmembrane spans lie at 13–33 (LLVN…ALTY) and 161–181 (LLLF…GGLV). The HAMP domain maps to 186–238 (ARGLAPLREVQAEVQQRSARHLQPIAVEAVPLEIRGLIDELNLLLERLRTALE). Residues 246 to 459 (DAAHEIRTPL…EVQVFLPKTQ (214 aa)) form the Histidine kinase domain. Histidine 249 bears the Phosphohistidine; by autocatalysis mark. Residues 455–477 (LPKTQPDATRPPARGPDSGRSHI) are disordered.

It localises to the membrane. The enzyme catalyses ATP + protein L-histidine = ADP + protein N-phospho-L-histidine.. Its function is as follows. Member of the two-component regulatory system PmrA/PmrB that plays a role in the regulation of resistance towards polymyxin B and cationic antimicrobial peptides in response to limiting concentrations of Mg(2+). Also autoregulates its own pmrAB operon under Mg(2+)-limiting conditions. May function as a membrane-associated protein kinase that phosphorylates PmrA in response to environmental signals leading to activation of specific gene promoters. The chain is Sensor protein kinase PmrB (pmrB) from Pseudomonas aeruginosa (strain ATCC 15692 / DSM 22644 / CIP 104116 / JCM 14847 / LMG 12228 / 1C / PRS 101 / PAO1).